A 376-amino-acid polypeptide reads, in one-letter code: GTPase Obg (376 aa).

The region spanning 2-161 (ASFVDEVLIR…RVVHVELRIV (160 aa)) is the Obg domain. Residues 162 to 328 (ADVGFVGLPN…LQEAFVRLSD (167 aa)) enclose the OBG-type G domain. GTP contacts are provided by residues 168 to 175 (GLPNAGKS), 193 to 197 (FTTRI), 215 to 218 (DVPG), 282 to 285 (TKLD), and 309 to 311 (SVH). Mg(2+)-binding residues include serine 175 and threonine 195.

Belongs to the TRAFAC class OBG-HflX-like GTPase superfamily. OBG GTPase family. In terms of assembly, monomer. It depends on Mg(2+) as a cofactor.

The protein resides in the cytoplasm. In terms of biological role, an essential GTPase which binds GTP, GDP and possibly (p)ppGpp with moderate affinity, with high nucleotide exchange rates and a fairly low GTP hydrolysis rate. Plays a role in control of the cell cycle, stress response, ribosome biogenesis and in those bacteria that undergo differentiation, in morphogenesis control. The polypeptide is GTPase Obg (Treponema pallidum (strain Nichols)).